Reading from the N-terminus, the 340-residue chain is MTPQAALQRVIEHREIFHDEMVSLMRQIMSGEVTPVMIAAIITGLRVKKETIGEIAAAASVMRELATPVKVPYDRHFVDIVGTGGDAAHTFNISSTAAFVVAAAGGKVAKHGGRSVSSSSGAADVLEALGANIMLSPEQVAACIDETGFGFMFAPNHHTAMKHVAPVRREMGVRTIFNILGPLTNPAGAPNTLMGVFHPDLVGILVRVMQRLGAERVLVVHGKDCLDEISLGAATMVGELNNGEIREYEIHPEDYGLQMQSLRNLRVGSAAESREMLLGVLGNQPGPAREIVCLNAGAALYVANVADSIGDGIVRAREAIASGAARAKLDQFINATKKFA.

5-phospho-alpha-D-ribose 1-diphosphate-binding positions include Gly-82, 85–86 (GD), Thr-90, 92–95 (NISS), 110–118 (KHGGRSVSS), and Ala-122. Residue Gly-82 coordinates anthranilate. Ser-94 is a Mg(2+) binding site. Arg-168 lines the anthranilate pocket. Residues Asp-227 and Glu-228 each contribute to the Mg(2+) site.

This sequence belongs to the anthranilate phosphoribosyltransferase family. In terms of assembly, homodimer. Mg(2+) serves as cofactor.

It carries out the reaction N-(5-phospho-beta-D-ribosyl)anthranilate + diphosphate = 5-phospho-alpha-D-ribose 1-diphosphate + anthranilate. Its pathway is amino-acid biosynthesis; L-tryptophan biosynthesis; L-tryptophan from chorismate: step 2/5. Its function is as follows. Catalyzes the transfer of the phosphoribosyl group of 5-phosphorylribose-1-pyrophosphate (PRPP) to anthranilate to yield N-(5'-phosphoribosyl)-anthranilate (PRA). The chain is Anthranilate phosphoribosyltransferase from Dechloromonas aromatica (strain RCB).